The sequence spans 78 residues: Acyl carrier protein (78 aa).

Residues 1–76 (MALFEDIQAV…DVVKYIEDNK (76 aa)) enclose the Carrier domain. An O-(pantetheine 4'-phosphoryl)serine modification is found at S36.

Belongs to the acyl carrier protein (ACP) family. Post-translationally, 4'-phosphopantetheine is transferred from CoA to a specific serine of apo-ACP by AcpS. This modification is essential for activity because fatty acids are bound in thioester linkage to the sulfhydryl of the prosthetic group.

Its subcellular location is the cytoplasm. The protein operates within lipid metabolism; fatty acid biosynthesis. Carrier of the growing fatty acid chain in fatty acid biosynthesis. The chain is Acyl carrier protein from Helicobacter pylori (strain J99 / ATCC 700824) (Campylobacter pylori J99).